A 208-amino-acid chain; its full sequence is uncharacterized protein (208 aa).

Residues 4-71 (DYYAILNITP…SRRAQYDRES (68 aa)) form the J domain. The interval 67–100 (YDRESASSSAKPRQSFFSRTNPQPQSQSQQGGPS) is disordered. Positions 72-87 (ASSSAKPRQSFFSRTN) are enriched in polar residues. The span at 88-100 (PQPQSQSQQGGPS) shows a compositional bias: low complexity. The helical transmembrane segment at 127–147 (GIANAFWTIVGTLAGAALGFI) threads the bilayer.

This sequence belongs to the DnaJ family.

Its subcellular location is the endoplasmic reticulum membrane. This is an uncharacterized protein from Schizosaccharomyces pombe (strain 972 / ATCC 24843) (Fission yeast).